Consider the following 137-residue polypeptide: Acidic phospholipase A2 VP8 (137 aa).

Residues 1–16 (MRILWIVAVCLIGVEG) form the signal peptide. Intrachain disulfides connect C41–C130, C43–C59, C58–C110, C64–C137, C65–C103, C72–C96, and C90–C101. Ca(2+) contacts are provided by Y42, G44, and G46. H62 is a catalytic residue. D63 is a binding site for Ca(2+). The active site involves D104.

This sequence belongs to the phospholipase A2 family. Group II subfamily. D49 sub-subfamily. Does not form a complex. Ca(2+) is required as a cofactor. Expressed by the venom gland.

It localises to the secreted. The enzyme catalyses a 1,2-diacyl-sn-glycero-3-phosphocholine + H2O = a 1-acyl-sn-glycero-3-phosphocholine + a fatty acid + H(+). Snake venom phospholipase A2 (PLA2) that is not toxic by itself, but the synergistical mixture of a basic and this acidic protein is lethal. PLA2 catalyzes the calcium-dependent hydrolysis of the 2-acyl groups in 3-sn-phosphoglycerides. The sequence is that of Acidic phospholipase A2 VP8 from Daboia palaestinae (Palestine viper).